Consider the following 527-residue polypeptide: Probable protein kinase UbiB (527 aa).

In terms of domain architecture, Protein kinase spans 123-527 (EFNETALASA…AIWLLIYLLS (405 aa)). ATP is bound by residues 129-137 (LASASIAQV) and K161. Residue D296 is the Proton acceptor of the active site. Residues 506–526 (FTSFILGLCTGLAIWLLIYLL) form a helical membrane-spanning segment.

It belongs to the ABC1 family. UbiB subfamily.

It localises to the cell inner membrane. Its pathway is cofactor biosynthesis; ubiquinone biosynthesis [regulation]. Is probably a protein kinase regulator of UbiI activity which is involved in aerobic coenzyme Q (ubiquinone) biosynthesis. The polypeptide is Probable protein kinase UbiB (Pasteurella multocida (strain Pm70)).